The chain runs to 156 residues: Small ribosomal subunit protein uS7 (156 aa).

This sequence belongs to the universal ribosomal protein uS7 family. In terms of assembly, part of the 30S ribosomal subunit. Contacts proteins S9 and S11.

Its function is as follows. One of the primary rRNA binding proteins, it binds directly to 16S rRNA where it nucleates assembly of the head domain of the 30S subunit. Is located at the subunit interface close to the decoding center, probably blocks exit of the E-site tRNA. The chain is Small ribosomal subunit protein uS7 from Prochlorococcus marinus (strain MIT 9211).